We begin with the raw amino-acid sequence, 413 residues long: Alpha-1-antitrypsin 1-5 (413 aa).

The first 24 residues, 1 to 24, serve as a signal peptide directing secretion; the sequence is MTPSISWCLLLLAGLCCLVPSFLA. 3 N-linked (GlcNAc...) asparagine glycosylation sites follow: Asn-64, Asn-101, and Asn-265. Residues 368–387 are RCL; sequence AATVLQGGFLSMPPILHFNR.

It belongs to the serpin family.

It is found in the secreted. Functionally, does not inhibit elastase or chymotrypsin. No target protease has been identified to date. This chain is Alpha-1-antitrypsin 1-5 (Serpina1e), found in Mus musculus (Mouse).